The following is an 89-amino-acid chain: Small ribosomal subunit protein uS15 (89 aa).

It belongs to the universal ribosomal protein uS15 family. As to quaternary structure, part of the 30S ribosomal subunit. Forms a bridge to the 50S subunit in the 70S ribosome, contacting the 23S rRNA.

In terms of biological role, one of the primary rRNA binding proteins, it binds directly to 16S rRNA where it helps nucleate assembly of the platform of the 30S subunit by binding and bridging several RNA helices of the 16S rRNA. Functionally, forms an intersubunit bridge (bridge B4) with the 23S rRNA of the 50S subunit in the ribosome. The protein is Small ribosomal subunit protein uS15 of Thermomicrobium roseum (strain ATCC 27502 / DSM 5159 / P-2).